The primary structure comprises 181 residues: NADH-quinone oxidoreductase subunit B (181 aa).

Positions 45, 46, 111, and 140 each coordinate [4Fe-4S] cluster.

Belongs to the complex I 20 kDa subunit family. In terms of assembly, NDH-1 is composed of 14 different subunits. Subunits NuoB, C, D, E, F, and G constitute the peripheral sector of the complex. The cofactor is [4Fe-4S] cluster.

The protein localises to the cell inner membrane. The enzyme catalyses a quinone + NADH + 5 H(+)(in) = a quinol + NAD(+) + 4 H(+)(out). Its function is as follows. NDH-1 shuttles electrons from NADH, via FMN and iron-sulfur (Fe-S) centers, to quinones in the respiratory chain. The immediate electron acceptor for the enzyme in this species is believed to be a menaquinone. Couples the redox reaction to proton translocation (for every two electrons transferred, four hydrogen ions are translocated across the cytoplasmic membrane), and thus conserves the redox energy in a proton gradient. The sequence is that of NADH-quinone oxidoreductase subunit B from Flavobacterium psychrophilum (strain ATCC 49511 / DSM 21280 / CIP 103535 / JIP02/86).